A 117-amino-acid polypeptide reads, in one-letter code: Ig heavy chain V region 5-76 (117 aa).

Positions 1–19 are cleaved as a signal peptide; sequence MNFVLSLIFLALILKGVQC. A framework-1 region spans residues 20-49; it reads EVHLVESGGGLVKPGGSLKLSCVVSGFTFN. Cys-41 and Cys-115 are disulfide-bonded. The segment at 50–54 is complementarity-determining-1; that stretch reads KYAMS. The tract at residues 55-68 is framework-2; it reads WVRQTPEKRLEWVA. A complementarity-determining-2 region spans residues 69 to 85; that stretch reads TISSGGLYTYYPDSVKG. A framework-3 region spans residues 86-117; that stretch reads RFTISRDNAGNTLYLQMSSLRSEDTAMYYCAR.

The protein is Ig heavy chain V region 5-76 of Mus musculus (Mouse).